A 293-amino-acid chain; its full sequence is N-acetylneuraminate lyase (293 aa).

Aceneuramate is bound by residues Ser-48 and Ser-49. Residue Tyr-137 is the Proton donor of the active site. Lys-165 functions as the Schiff-base intermediate with substrate in the catalytic mechanism. Aceneuramate is bound by residues Thr-167, Gly-189, Asp-191, Glu-192, and Ser-208.

The protein belongs to the DapA family. NanA subfamily. In terms of assembly, homotetramer.

It is found in the cytoplasm. It catalyses the reaction aceneuramate = aldehydo-N-acetyl-D-mannosamine + pyruvate. It participates in amino-sugar metabolism; N-acetylneuraminate degradation; D-fructose 6-phosphate from N-acetylneuraminate: step 1/5. Functionally, catalyzes the reversible aldol cleavage of N-acetylneuraminic acid (sialic acid; Neu5Ac) to form pyruvate and N-acetylmannosamine (ManNAc) via a Schiff base intermediate. The protein is N-acetylneuraminate lyase of Staphylococcus aureus (strain bovine RF122 / ET3-1).